Consider the following 60-residue polypeptide: MRKLRGGQTKETRKQRQERKEENLKIQQQMKTIVLPTIGVIFLCIVVYVFLKTRPRYEEL.

Positions 1 to 23 (MRKLRGGQTKETRKQRQERKEEN) are disordered. The segment covering 8 to 23 (QTKETRKQRQERKEEN) has biased composition (basic and acidic residues). Residues 8-33 (QTKETRKQRQERKEENLKIQQQMKTI) adopt a coiled-coil conformation. Residues 31–51 (KTIVLPTIGVIFLCIVVYVFL) form a helical membrane-spanning segment.

It belongs to the SMCO4 family.

It is found in the membrane. The protein is Single-pass membrane and coiled-coil domain-containing protein 4 homolog of Anopheles gambiae (African malaria mosquito).